The sequence spans 334 residues: Protein FAM50B (334 aa).

Position 2 is an N-acetylalanine (Ala2). The interval 122–175 (FTLDEEEGDQEDSRQAESAEAHSAGAKKNLGKNPDVDTSFLPDREREEEENRLR) is disordered. 2 stretches are compositionally biased toward basic and acidic residues: residues 132–141 (EDSRQAESAE) and 163–175 (PDREREEEENRLR).

The protein belongs to the FAM50 family. As to expression, widely expressed. Abundant in testis, where it is expressed in seminiferous tubules, not in the interstitium. At the cellular level, expressed in primary spermatocytes and round spermatids, but not detectable in spermatogonia, elongating spermatids, mature spermatozoa, Sertoli cells or Leydig cells.

The chain is Protein FAM50B (Fam50b) from Mus musculus (Mouse).